Consider the following 350-residue polypeptide: MITVNFLILLLGLVFLVKGSDYFVKSASTIAKKLGVSEFVIGLTLVAIGTSIPELASSIAASIQQASGIVIGNVVGSNIANVGLIVGVAALLSPMKTEIDMLKRDGYIMLFSAVLFFVFAFNRELSMLEAGLFVLLYIAYVFFLFEEAEKYEGKLHFKEFITYFFKFKYINSAMQKLNGNRNRNSDSDRNSDSGNGNERLEGGFAKDIFTLVLSCAAIVIGAKYFVEESIFFAELLGIPDTVIGTTLVAVGTSLPELVVTVSAARQGYGSIALGNVIGSNITNIFLILGLSGLFYPLSVAEMSLFFTTPVMIAISLILLIFISTGWEIKRWEGVVLMMFYVAFLVVLFYI.

Transmembrane regions (helical) follow at residues 4 to 24, 39 to 59, 69 to 89, 101 to 121, 125 to 145, 202 to 222, 242 to 264, 276 to 296, 302 to 322, and 330 to 350; these read VNFL…DYFV, FVIG…ASSI, IVIG…VGVA, MLKR…VFAF, LSML…FFLF, GGFA…VIGA, VIGT…VSAA, VIGS…LFYP, MSLF…LIFI, and RWEG…LFYI.

Belongs to the Ca(2+):cation antiporter (CaCA) (TC 2.A.19) family.

It is found in the cell membrane. Calcium transport is inhibited by Na(+), K(+), Li(+), Mg(2+) or Mn(2+). Catalyzes Na(+)/Ca(2+) exchange. The transport is electrogenic with a likely stoichiometry of 3 or more Na(+) for each Ca(2+). Is K(+)-independent. This Methanosarcina acetivorans (strain ATCC 35395 / DSM 2834 / JCM 12185 / C2A) protein is Sodium/calcium exchanger MaX1 (maX1).